The primary structure comprises 455 residues: Bleomycin hydrolase (455 aa).

Methionine 1 carries the N-acetylmethionine modification. Active-site residues include cysteine 73 and histidine 372. Position 391 is an N6-acetyllysine (lysine 391). The active site involves asparagine 396.

The protein belongs to the peptidase C1 family. As to quaternary structure, homohexamer. Interacts with NUDT12 (via ANK repeats).

It is found in the cytoplasm. It localises to the cytoplasmic granule. The enzyme catalyses Inactivates bleomycin B2 (a cytotoxic glycometallopeptide) by hydrolysis of a carboxyamide bond of beta-aminoalanine, but also shows general aminopeptidase activity. The specificity varies somewhat with source, but amino acid arylamides of Met, Leu and Ala are preferred.. In terms of biological role, the normal physiological role of BLM hydrolase is unknown, but it catalyzes the inactivation of the antitumor drug BLM (a glycopeptide) by hydrolyzing the carboxamide bond of its B-aminoalaninamide moiety thus protecting normal and malignant cells from BLM toxicity. This is Bleomycin hydrolase (BLMH) from Homo sapiens (Human).